A 220-amino-acid chain; its full sequence is Claudin-24 (220 aa).

At 1–10 (MALIFRTAMQ) the chain is on the cytoplasmic side. A helical membrane pass occupies residues 11–31 (SVGLLLSLLGWILSIITTYLP). Residues 32–81 (HWKNLNLDLNEMENWTMGLWQTCVIQEEVGMQCKDFDSFLALPAELRVSR) lie on the Extracellular side of the membrane. The chain crosses the membrane as a helical span at residues 82–102 (ILMFLSNGLGFLGLLVSGFGL). The Cytoplasmic segment spans residues 103 to 117 (DCLRIGESQRDLKRR). Residues 118 to 138 (LLILGGILSWASGITALVPVS) form a helical membrane-spanning segment. The Extracellular portion of the chain corresponds to 139 to 161 (WVAHKTVQEFWDENVPDFVPRWE). A helical membrane pass occupies residues 162-182 (FGEALFLGWFAGLSLLLGGCL). The Cytoplasmic portion of the chain corresponds to 183 to 220 (LNCAACSSHAPLALGHYAVAQMQTQCPYLEDGTADPQV).

This sequence belongs to the claudin family.

It localises to the cell junction. It is found in the tight junction. The protein localises to the cell membrane. Plays a major role in tight junction-specific obliteration of the intercellular space, through calcium-independent cell-adhesion activity. In Homo sapiens (Human), this protein is Claudin-24.